Consider the following 66-residue polypeptide: Large ribosomal subunit protein bL35 (66 aa).

Belongs to the bacterial ribosomal protein bL35 family.

The polypeptide is Large ribosomal subunit protein bL35 (Jannaschia sp. (strain CCS1)).